The chain runs to 198 residues: Outer-membrane lipoprotein carrier protein (198 aa).

Residues 1-17 (MKKFLFSLCLLSSTVLA) form the signal peptide.

Belongs to the LolA family. In terms of assembly, monomer.

Its subcellular location is the periplasm. Functionally, participates in the translocation of lipoproteins from the inner membrane to the outer membrane. Only forms a complex with a lipoprotein if the residue after the N-terminal Cys is not an aspartate (The Asp acts as a targeting signal to indicate that the lipoprotein should stay in the inner membrane). The sequence is that of Outer-membrane lipoprotein carrier protein from Aliivibrio fischeri (strain ATCC 700601 / ES114) (Vibrio fischeri).